A 417-amino-acid polypeptide reads, in one-letter code: Carboxypeptidase B (417 aa).

Residues 1–16 form the signal peptide; sequence MLAFLILVTVTLASAH. The propeptide at 17-110 is activation peptide; sequence HSGEHFEGDK…LEAQFDSRVR (94 aa). A Peptidase M14 domain is found at 118–412; sequence KYNNWETIEA…LAIKYVTSYV (295 aa). A disulfide bond links cysteine 173 and cysteine 186. Zn(2+)-binding residues include histidine 176 and glutamate 179. Residues 176 to 179, arginine 234, and 251 to 252 each bind substrate; these read HARE and NR. Cystine bridges form between cysteine 245–cysteine 268 and cysteine 259–cysteine 273. Histidine 304 serves as a coordination point for Zn(2+). Substrate is bound by residues 305-306 and tyrosine 356; that span reads SY. The active-site Proton donor/acceptor is the glutamate 378.

Belongs to the peptidase M14 family. Zn(2+) serves as cofactor.

The protein resides in the secreted. Its subcellular location is the zymogen granule lumen. It carries out the reaction Preferential release of a C-terminal lysine or arginine amino acid.. This chain is Carboxypeptidase B (CPB1), found in Bos taurus (Bovine).